A 231-amino-acid polypeptide reads, in one-letter code: PX domain-containing protein 1 (231 aa).

Positions 1-134 constitute a PX domain; sequence MASAVFEGTS…TFFERSPLDQ (134 aa).

The chain is PX domain-containing protein 1 (PXDC1) from Homo sapiens (Human).